The following is a 108-amino-acid chain: uncharacterized protein (108 aa).

At Thr-56 the chain carries Phosphothreonine. Residues 89 to 108 (AQAKGTEQAEALKKGTSKWF) are disordered.

It is found in the cytoplasm. This is an uncharacterized protein from Schizosaccharomyces pombe (strain 972 / ATCC 24843) (Fission yeast).